The chain runs to 349 residues: Holliday junction branch migration complex subunit RuvB (349 aa).

Residues 1 to 183 (MTDPSRLVTP…FGIPIRLNFY (183 aa)) form a large ATPase domain (RuvB-L) region. ATP-binding positions include L22, R23, G64, K67, T68, T69, 130–132 (EDF), R173, Y183, and R220. T68 is a binding site for Mg(2+). A small ATPAse domain (RuvB-S) region spans residues 184-254 (TIEELESIVT…IADHALGALE (71 aa)). The segment at 257-349 (SAGLDAMDRR…GLFGDTGDQE (93 aa)) is head domain (RuvB-H). Positions 293, 312, and 317 each coordinate DNA.

It belongs to the RuvB family. As to quaternary structure, homohexamer. Forms an RuvA(8)-RuvB(12)-Holliday junction (HJ) complex. HJ DNA is sandwiched between 2 RuvA tetramers; dsDNA enters through RuvA and exits via RuvB. An RuvB hexamer assembles on each DNA strand where it exits the tetramer. Each RuvB hexamer is contacted by two RuvA subunits (via domain III) on 2 adjacent RuvB subunits; this complex drives branch migration. In the full resolvosome a probable DNA-RuvA(4)-RuvB(12)-RuvC(2) complex forms which resolves the HJ.

It localises to the cytoplasm. It catalyses the reaction ATP + H2O = ADP + phosphate + H(+). Its function is as follows. The RuvA-RuvB-RuvC complex processes Holliday junction (HJ) DNA during genetic recombination and DNA repair, while the RuvA-RuvB complex plays an important role in the rescue of blocked DNA replication forks via replication fork reversal (RFR). RuvA specifically binds to HJ cruciform DNA, conferring on it an open structure. The RuvB hexamer acts as an ATP-dependent pump, pulling dsDNA into and through the RuvAB complex. RuvB forms 2 homohexamers on either side of HJ DNA bound by 1 or 2 RuvA tetramers; 4 subunits per hexamer contact DNA at a time. Coordinated motions by a converter formed by DNA-disengaged RuvB subunits stimulates ATP hydrolysis and nucleotide exchange. Immobilization of the converter enables RuvB to convert the ATP-contained energy into a lever motion, pulling 2 nucleotides of DNA out of the RuvA tetramer per ATP hydrolyzed, thus driving DNA branch migration. The RuvB motors rotate together with the DNA substrate, which together with the progressing nucleotide cycle form the mechanistic basis for DNA recombination by continuous HJ branch migration. Branch migration allows RuvC to scan DNA until it finds its consensus sequence, where it cleaves and resolves cruciform DNA. The sequence is that of Holliday junction branch migration complex subunit RuvB from Rhodopseudomonas palustris (strain ATCC BAA-98 / CGA009).